The sequence spans 692 residues: Epithelial sodium channel subunit alpha (692 aa).

The interval 1–67 (MSSIKGNKLE…PAAPQQPTAE (67 aa)) is disordered. At 1–108 (MSSIKGNKLE…CSQHNRMKTA (108 aa)) the chain is on the cytoplasmic side. The segment covering 56–65 (PEPAAPQQPT) has biased composition (low complexity). Residues 109 to 129 (FWAVLWLCTFGMMYWQFGLLF) form a helical membrane-spanning segment. Residues 130-585 (GEYFSYPVSL…SQWSLWFGSS (456 aa)) lie on the Extracellular side of the membrane. Intrachain disulfides connect Cys-156/Cys-328, Cys-252/Cys-259, Cys-305/Cys-312, Cys-417/Cys-502, Cys-439/Cys-479, Cys-439/Cys-498, Cys-443/Cys-494, Cys-452/Cys-479, Cys-452/Cys-502, and Cys-454/Cys-468. Positions 198-266 (RSRRDLRGTL…SDCFYQTYSS (69 aa)) are gating release of inhibition by proteolysis (GRIP); protease-sensitive region that is responsible for the proteolytic activation of the channel. A helical transmembrane segment spans residues 586–606 (VLSVVEMAELIFDLLVITFLM). The Cytoplasmic segment spans residues 607–692 (LLRRFRSRYW…GSSACPLGGP (86 aa)). A disordered region spans residues 627–692 (EVASTLASSP…GSSACPLGGP (66 aa)). A compositionally biased stretch (polar residues) spans 628 to 637 (VASTLASSPP). Pro residues predominate over residues 653-666 (GPAPSPALTAPPPA). The short motif at 663–667 (PPPAY) is the PY motif; recruits WW domain-containing proteins and is thereby required for ubiquitination and inhibition of the channel by NEDD4 and NEDD4L element. Positions 682-692 (AGSSACPLGGP) are enriched in low complexity.

Belongs to the amiloride-sensitive sodium channel (TC 1.A.6) family. SCNN1A subfamily. As to quaternary structure, heterotrimer; containing an alpha/SCNN1A, a beta/SCNN1B and a gamma/SCNN1G subunit. Interacts with WWP1 (via WW domains). Interacts with WWP2 (via WW domains); inhibits the channel. Interacts with BPIFA1; the interaction is indirect via SCNN1B and inhibits the proteolytic processing of SCNN1A and SCNN1G and the activation of ENaC. Interacts with the full-length immature form of PCSK9 (pro-PCSK9). Ubiquitinated. Can be ubiquitinated at multiple sites and undergo monoubiquitination and polyubiquitination. Ubiquitination by NEDD4 or NEDD4L inhibits the ENaC channel through endocytosis, intracellular retention and degradation of its individual subunits. In terms of processing, N-glycosylated. Post-translationally, ENaC is activated through the proteolytic maturation of its subunits. Furin cleaves the SCNN1A subunit, which results in a stepwise increase in the open probability of the channel due to the release of an inhibitory tract. BPIFA1, which is recruited by the SCNN1B subunit, prevents the proteolytic activation of ENaC.

It is found in the apical cell membrane. It localises to the cell projection. The protein localises to the cilium. Its subcellular location is the cytoplasmic granule. The protein resides in the cytoplasm. It is found in the cytoplasmic vesicle. It localises to the secretory vesicle. The protein localises to the acrosome. Its subcellular location is the flagellum. It carries out the reaction Na(+)(in) = Na(+)(out). Originally identified and characterized by its inhibition by the diuretic drug amiloride. This is one of the three pore-forming subunits of the heterotrimeric epithelial sodium channel (ENaC), a critical regulator of sodium balance and fluid homeostasis. ENaC operates in epithelial tissues, where it mediates the electrodiffusion of sodium ions from extracellular fluid through the apical membrane of cells, with water following osmotically. It plays a key role in maintaining sodium homeostasis through electrogenic sodium reabsorption in the kidneys. Additionally, ENaC is essential for airway surface liquid homeostasis, which is crucial for proper mucus clearance. The sequence is that of Epithelial sodium channel subunit alpha from Pan troglodytes (Chimpanzee).